The chain runs to 446 residues: Putative hydrolase YbfO (446 aa).

A signal peptide spans 1-28; it reads MKRMIVRMTLPLLIVCLAFSSFSASARA.

The protein is Putative hydrolase YbfO (ybfO) of Bacillus subtilis (strain 168).